The chain runs to 345 residues: MNYKLFSPYTIKDVTLKNRIVMSPMCMYSSKNEDGQITNFHLIHYGTRAAGQVGLVMIEATAVLPEGRISNKDLGIWDDSLIEGLHKATTFIHDNGAKAAIQLAHAGRKAELETDALAPSAIPFNETMKMPIEMSKHQIKDTVLAFQQAAVRSKQAGFDVIEIHGAHGYLINEFLSPLTNKRTDEYGGSPENRYRFLREIIESINEVWNGPLFVRISANDYHPDGLTVQDYVQYTKWMKEQGVDLIDCSSGAVVPARIDVYPGYQVQYAKHIKEHANIATGAVGLITTGAQAEQILNNNEADLIFIGRELLRNPYFPRIAANELGFELEEPYQYERAPGKISTNK.

S23 to C26 contacts FMN. Y28 serves as a coordination point for substrate. Residues A60 and Q102 each contribute to the FMN site. H164 to H167 provides a ligand contact to substrate. Residues R215 and G307–R308 each bind FMN.

It belongs to the NADH:flavin oxidoreductase/NADH oxidase family. NamA subfamily. In terms of assembly, homotetramer. The cofactor is FMN.

The catalysed reaction is A + NADPH + H(+) = AH2 + NADP(+). Its function is as follows. Catalyzes the reduction of the double bond of an array of alpha,beta-unsaturated aldehydes and ketones. It also reduces the nitro group of nitroester and nitroaromatic compounds. It could have a role in detoxification processes. This chain is NADPH dehydrogenase, found in Bacillus cereus (strain Q1).